Consider the following 363-residue polypeptide: Histidinol-phosphate aminotransferase (363 aa).

The residue at position 215 (Lys-215) is an N6-(pyridoxal phosphate)lysine.

Belongs to the class-II pyridoxal-phosphate-dependent aminotransferase family. Histidinol-phosphate aminotransferase subfamily. In terms of assembly, homodimer. Pyridoxal 5'-phosphate serves as cofactor.

The enzyme catalyses L-histidinol phosphate + 2-oxoglutarate = 3-(imidazol-4-yl)-2-oxopropyl phosphate + L-glutamate. The protein operates within amino-acid biosynthesis; L-histidine biosynthesis; L-histidine from 5-phospho-alpha-D-ribose 1-diphosphate: step 7/9. The protein is Histidinol-phosphate aminotransferase of Buchnera aphidicola subsp. Diuraphis noxia.